Consider the following 167-residue polypeptide: Inclusion membrane protein G (167 aa).

Helical transmembrane passes span 37–57 (LSLF…AVLF) and 63–83 (VLPY…AVIV). 2 disordered regions span residues 97–136 (KRSP…STFG) and 148–167 (VSGA…SHSF). The segment covering 122 to 134 (ESASPQASPTSST) has biased composition (low complexity). The short motif at 161 to 166 (RSRSHS) is the Phosphorylation-dependent binding motif element. Position 166 is a phosphoserine (Ser-166).

Phosphorylated by chlamydial kinase Pnk1.

It localises to the secreted. Its subcellular location is the host vacuole. The protein localises to the host pathogen-containing vacuole. It is found in the host pathogen-containing vacuole membrane. Inclusion membrane protein probably involved in early modification events of the chlamydial inclusion. Binds to the host cell 14-3-3 beta (YWHAB); phosphorylation of Ser-166 is probably required. This is Inclusion membrane protein G (incG) from Chlamydia trachomatis serovar D (strain ATCC VR-885 / DSM 19411 / UW-3/Cx).